Here is a 3005-residue protein sequence, read N- to C-terminus: Highly reducing polyketide synthase AFT9-1 (3005 aa).

Residues 1–337 (MDPQQRLLLE…GTNAHAILER (337 aa)) enclose the Ketosynthase family 3 (KS3) domain. Residues Cys-87, His-222, and His-260 each act as for beta-ketoacyl synthase activity in the active site. A malonyl-CoA:ACP transacylase (MAT) domain region spans residues 437 to 751 (VFTGQGAQWP…SYMSALVRGS (315 aa)). An N-terminal hotdog fold region spans residues 821–936 (HDLLGLKMTD…GSVEVKYAAA (116 aa)). A dehydratase (DH) domain region spans residues 821-1114 (HDLLGLKMTD…SGLELRRLAP (294 aa)). The region spanning 821 to 1118 (HDLLGLKMTD…LRRLAPTGQP (298 aa)) is the PKS/mFAS DH domain. His-853 acts as the Proton acceptor; for dehydratase activity in catalysis. Residues 963–1118 (IEKISSQELY…LRRLAPTGQP (156 aa)) form a C-terminal hotdog fold region. The active-site Proton donor; for dehydratase activity is Asp-1028. The interval 1259–1445 (ADDSSKRCYD…MRKASLNMQL (187 aa)) is methyltransferase (CMet) domain. Residues 1683-1985 (EFMKMPVFTE…QHHRNESTVL (303 aa)) are enoyl reductase (ER) (ER) domain. The segment at 2008 to 2191 (ATYVVSGGRG…YMSLNVGTIE (184 aa)) is ketoreductase (KR) domain. Positions 2293–2375 (TRDFEKISQL…SLGAKVASRS (83 aa)) constitute a Carrier domain. Position 2335 is an O-(pantetheine 4'-phosphoryl)serine (Ser-2335).

It participates in mycotoxin biosynthesis. In terms of biological role, highly reducing polyketide synthase; part of the gene clusters that mediate the biosynthesis of the host-selective toxins (HSTs) AF-toxins responsible for Alternaria black spot of strawberry disease by the strawberry pathotype. AF-toxin I and III are valine derivatives of 2,3-dyhydroxy-isovaleric acid and 2-hydroxy-isovaleric acid respectively, while AF II is an isoleucine derivative of 2-hydroxy-valeric acid. These derivatives are bound to a 9,10-epoxy-8-hydroxy-9-methyl-decatrienoic acid (EDA) moiety. On cellular level, AF-toxins affect plasma membrane of susceptible cells and cause a sudden increase in loss of K(+) after a few minutes of toxin treatment. The aldo-keto reductase AFTS1 catalyzes the conversion of 2-keto-isovaleric acid (2-KIV) to 2-hydroxy-isovaleric acid (2-HIV) by reduction of its ketone to an alcohol. The acyl-CoA ligase AFT1, the hydrolase AFT2 and the enoyl-CoA hydratases AFT3 and AFT6, but also the polyketide synthase AFT9, the acyl-CoA dehydrogenase AFT10, the cytochrome P450 monooxygenase AFT11 and the oxidoreductase AFT12 are all involved in the biosynthesis of the AK-, AF- and ACT-toxin common EDA structural moiety. The exact function of each enzyme, and of additional enzymes identified within the AF-toxin clusters have still to be determined. This Alternaria alternata (Alternaria rot fungus) protein is Highly reducing polyketide synthase AFT9-1.